The chain runs to 84 residues: Protein myomixer (84 aa).

The Cytoplasmic segment spans residues 1–4; the sequence is MPTP. Residues 5–25 form a helical membrane-spanning segment; that stretch reads LLPLLLRLLLSCLLLPAARLA. At 26–84 the chain is on the extracellular side; the sequence is RQYLLPLLRRLARRLGSQDMREALLGCLLFILSQRHSPDAGEASRVDRLERRERLGPQK. An AxLyCxL motif is present at residues 48 to 57; that stretch reads ALLGCLLFIL. Residues 62–84 are disordered; sequence SPDAGEASRVDRLERRERLGPQK.

It belongs to the MYMX family. In terms of assembly, interacts with MYMK.

It localises to the cell membrane. Functionally, myoblast-specific protein that mediates myoblast fusion, an essential step for the formation of multi-nucleated muscle fibers. Involved in membrane fusion downstream of the lipid mixing step mediated by MYMK. Acts by generating membrane stresses via its extracellular C-terminus, leading to drive fusion pore formation. Acts independently of MYMK. Involved in skeletal muscle regeneration in response to injury by mediating the fusion of satellite cells, a population of muscle stem cells, with injured myofibers. This chain is Protein myomixer, found in Homo sapiens (Human).